The primary structure comprises 335 residues: Mycobacterial beta-ketoacyl-[acyl-carrier-protein] synthase III (335 aa).

Active-site residues include Cys122 and His258. Residues 259–263 form an ACP-binding region; it reads QANSR. Asn289 is an active-site residue.

Belongs to the thiolase-like superfamily. FabH family. Homodimer.

The protein localises to the cytoplasm. The catalysed reaction is malonyl-[ACP] + dodecanoyl-CoA + H(+) = 3-oxotetradecanoyl-[ACP] + CO2 + CoA. It participates in lipid metabolism; fatty acid biosynthesis. Its pathway is lipid metabolism; mycolic acid biosynthesis. Catalyzes the condensation reaction of fatty acid synthesis by the addition to an acyl acceptor of two carbons from malonyl-ACP. Catalyzes the first condensation reaction which initiates fatty acid synthesis and may therefore play a role in governing the total rate of fatty acid production. Possesses both acetoacetyl-ACP synthase and acetyl transacylase activities. Its substrate specificity determines the biosynthesis of branched-chain and/or straight-chain of fatty acids. The protein is Mycobacterial beta-ketoacyl-[acyl-carrier-protein] synthase III of Mycobacterium bovis (strain ATCC BAA-935 / AF2122/97).